Reading from the N-terminus, the 200-residue chain is Probable GTP-binding protein EngB (200 aa).

The EngB-type G domain maps to Asn-22–Gly-199. GTP is bound by residues Gly-30 to Ser-37, Gly-57 to Leu-61, Asp-85 to Gly-88, Thr-155 to Asp-158, and Phe-177 to Asn-180. Mg(2+)-binding residues include Ser-37 and Thr-59.

This sequence belongs to the TRAFAC class TrmE-Era-EngA-EngB-Septin-like GTPase superfamily. EngB GTPase family. Mg(2+) is required as a cofactor.

Necessary for normal cell division and for the maintenance of normal septation. The polypeptide is Probable GTP-binding protein EngB (Aliarcobacter butzleri (strain RM4018) (Arcobacter butzleri)).